The following is a 535-amino-acid chain: Large neutral amino acids transporter small subunit 2 (535 aa).

The span at 1-10 shows a compositional bias: basic residues; that stretch reads MEKGARHRHN. Residues 1–30 form a disordered region; it reads MEKGARHRHNTDKNHAGGSESEDFPEASSG. The Cytoplasmic portion of the chain corresponds to 1 to 44; the sequence is MEKGARHRHNTDKNHAGGSESEDFPEASSGGGGVALKKEIGLVS. Phosphoserine is present on residues serine 19, serine 28, and serine 29. A helical transmembrane segment spans residues 45–65; it reads ACGIIVGNIIGSGIFVSPKGV. Isoleucine 53 is an L-leucine binding site. The Extracellular segment spans residues 66–73; sequence LENAGSVG. Residues 74–95 form a helical membrane-spanning segment; that stretch reads LAVIVWIVTGLITAVGALCYAE. At 96–116 the chain is on the cytoplasmic side; the sequence is LGVTIPKSGGDYSYVKDIFGG. The chain crosses the membrane as a helical span at residues 117–149; the sequence is LAGFLRLWIAVLVIYPTNQAVIALTFSNYVLQP. Asparagine 134 lines the L-tryptophan pocket. Residues 150–157 are Extracellular-facing; the sequence is LFPTCFPP. The helical transmembrane segment at 158 to 178 threads the bilayer; it reads DSGLRLLAAICLLLLTWVNCS. The Cytoplasmic portion of the chain corresponds to 179–181; it reads SVR. The chain crosses the membrane as a helical span at residues 182–210; sequence WATRVQDIFTAGKLLALALIIIMGVVQIC. Residues 211 to 230 are Extracellular-facing; sequence KGEYFWLEPKNAFDNFQEPD. A helical transmembrane segment spans residues 231–252; the sequence is IGLIALAFLQGSFAYGGWNFLN. Glycine 246 provides a ligand contact to L-leucine. At 253–265 the chain is on the cytoplasmic side; it reads YVTEELVDPYKNL. The chain crosses the membrane as a helical span at residues 266-287; sequence PRAIFISIPLVTFVYVFANVAY. Residues 288–312 are Extracellular-facing; that stretch reads ITAMSPQELLASNAVAVTFGEKLLG. A helical transmembrane segment spans residues 313-338; that stretch reads VMAWIMPISVALSTFGGVNGSLFTSS. The Cytoplasmic portion of the chain corresponds to 339–364; the sequence is RLFFAGAREGHLPSVLAMIHVKRCTP. A helical membrane pass occupies residues 365–382; the sequence is IPALLFTCLSTLLMLVTS. Residues 383–386 lie on the Extracellular side of the membrane; the sequence is DMYT. A helical membrane pass occupies residues 387–408; sequence LINYVGFINYLFYGVTVAGQIV. An L-tryptophan-binding site is contributed by asparagine 395. The Cytoplasmic portion of the chain corresponds to 409–423; sequence LRWKKPDIPRPIKIN. 2 consecutive transmembrane segments (helical) span residues 424-446 and 447-466; these read LLFPIIYLLFWAFLLIFSLWSEP and VVCGIGLAIMLTGVPVYFLG. Residues 467–535 are Cytoplasmic-facing; that stretch reads VYWQHKPKCF…DKDSLEQSQP (69 aa). The tract at residues 500–535 is disordered; it reads GGSGTEGTREDMEEQQQPICQPSPGKDKDSLEQSQP. Over residues 524–535 the composition is skewed to basic and acidic residues; that stretch reads GKDKDSLEQSQP. Residue serine 529 is modified to Phosphoserine.

It belongs to the amino acid-polyamine-organocation (APC) superfamily. L-type amino acid transporter (LAT) (TC 2.A.3.8) family. In terms of assembly, disulfide-linked heterodimer composed of the catalytic light chain subunit SLC7A8 and the heavy chain subunit SLC3A2. SLC3A2 acts as a chaperone for correct plasma membrane trafficking and stabilization of SLC7A8 and modulates the substrate affinity and specificity of SLC7A8. ICAM-1 associates with the heterodimer SLC3A2/SLC7A8; facilitates leucine uptake. Mainly expressed in kidney and small intestine.

The protein localises to the cell membrane. The protein resides in the basolateral cell membrane. The enzyme catalyses L-histidine(in) + L-phenylalanine(out) = L-histidine(out) + L-phenylalanine(in). It carries out the reaction L-tryptophan(in) + L-phenylalanine(out) = L-tryptophan(out) + L-phenylalanine(in). It catalyses the reaction L-isoleucine(in) + L-phenylalanine(out) = L-isoleucine(out) + L-phenylalanine(in). The catalysed reaction is L-valine(in) + L-phenylalanine(out) = L-valine(out) + L-phenylalanine(in). The enzyme catalyses L-leucine(in) + L-phenylalanine(out) = L-leucine(out) + L-phenylalanine(in). It carries out the reaction L-glutamine(in) + L-phenylalanine(out) = L-glutamine(out) + L-phenylalanine(in). It catalyses the reaction L-cysteine(in) + L-phenylalanine(out) = L-cysteine(out) + L-phenylalanine(in). The catalysed reaction is L-phenylalanine(out) + L-methionine(in) = L-phenylalanine(in) + L-methionine(out). The enzyme catalyses L-leucine(out) + L-methionine(in) = L-leucine(in) + L-methionine(out). It carries out the reaction L-cysteine(out) + L-methionine(in) = L-cysteine(in) + L-methionine(out). It catalyses the reaction S-methylmercury-L-cysteine(out) + L-methionine(in) = S-methylmercury-L-cysteine(in) + L-methionine(out). The catalysed reaction is S-methylmercury-L-cysteine(in) + L-leucine(out) = S-methylmercury-L-cysteine(out) + L-leucine(in). The enzyme catalyses S-methylmercury-L-cysteine(in) + L-phenylalanine(out) = S-methylmercury-L-cysteine(out) + L-phenylalanine(in). It carries out the reaction L-phenylalanine(out) + L-serine(in) = L-phenylalanine(in) + L-serine(out). It catalyses the reaction L-phenylalanine(out) + glycine(in) = L-phenylalanine(in) + glycine(out). The catalysed reaction is L-phenylalanine(out) + L-alanine(in) = L-phenylalanine(in) + L-alanine(out). The enzyme catalyses 3,3',5-triiodo-L-thyronine(out) = 3,3',5-triiodo-L-thyronine(in). It carries out the reaction 3,3'-diiodo-L-thyronine(out) = 3,3'-diiodo-L-thyronine(in). It catalyses the reaction L-dopa(out) + L-phenylalanine(in) = L-dopa(in) + L-phenylalanine(out). With respect to regulation, the transporter activity is inhibited by 2-aminobicyclo-(2,2,1)heptane-2-carboxylic acid (BCH) (a specific inhibitor of system L transport). Associates with SLC3A2 to form a functional heterodimeric complex that translocates small and large neutral amino acids with broad specificity and a stoichiometry of 1:1. Functions as amino acid antiporter mediating the influx of extracellular essential amino acids mainly in exchange with the efflux of highly concentrated intracellular amino acids. Has relatively symmetrical selectivities but strongly asymmetrical substrate affinities at both the intracellular and extracellular sides of the transporter. This asymmetry allows SLC7A8 to regulate intracellular amino acid pools (mM concentrations) by exchange with external amino acids (uM concentration range), equilibrating the relative concentrations of different amino acids across the plasma membrane instead of mediating their net uptake. May play an essential role in the reabsorption of neutral amino acids from the epithelial cells to the bloodstream in the kidney. Involved in the uptake of methylmercury (MeHg) when administered as the L-cysteine or D,L-homocysteine complexes, and hence plays a role in metal ion homeostasis and toxicity. Involved in the cellular activity of small molecular weight nitrosothiols, via the stereoselective transport of L-nitrosocysteine (L-CNSO) across the transmembrane. Imports the thyroid hormone diiodothyronine (T2) and to a smaller extent triiodothyronine (T3) but not rT 3 or thyroxine (T4). Mediates the uptake of L-DOPA. May participate in auditory function. The polypeptide is Large neutral amino acids transporter small subunit 2 (Oryctolagus cuniculus (Rabbit)).